A 278-amino-acid polypeptide reads, in one-letter code: Polyamine aminopropyltransferase (278 aa).

A PABS domain is found at 5-238 (ELWFTEQQTP…GLWSFTLGSK (234 aa)). Residue Q34 coordinates S-methyl-5'-thioadenosine. H65 and D89 together coordinate spermidine. S-methyl-5'-thioadenosine-binding positions include E109 and 140 to 141 (DG). Catalysis depends on D158, which acts as the Proton acceptor. 158–161 (DSTD) lines the spermidine pocket. P165 provides a ligand contact to S-methyl-5'-thioadenosine.

The protein belongs to the spermidine/spermine synthase family. In terms of assembly, homodimer or homotetramer.

The protein resides in the cytoplasm. The enzyme catalyses S-adenosyl 3-(methylsulfanyl)propylamine + putrescine = S-methyl-5'-thioadenosine + spermidine + H(+). It functions in the pathway amine and polyamine biosynthesis; spermidine biosynthesis; spermidine from putrescine: step 1/1. Its function is as follows. Catalyzes the irreversible transfer of a propylamine group from the amino donor S-adenosylmethioninamine (decarboxy-AdoMet) to putrescine (1,4-diaminobutane) to yield spermidine. The protein is Polyamine aminopropyltransferase of Caldicellulosiruptor bescii (strain ATCC BAA-1888 / DSM 6725 / KCTC 15123 / Z-1320) (Anaerocellum thermophilum).